The chain runs to 312 residues: MAWQHKDLLGLRGLAKQEIELILDTAAPMKDIIGRDIKKVPTLRGKSIVCLFYEASTRTRTSFELAGKFMSADTVNIAAASSSVVKGESLIDTGKTLDAMGTDIIVIRHAASGAPHLLAKHVKARVVNAGDGAHEHPTQGLLDLYTIKERKGRLEGLTVTILGDVLHSRVARSNIWGLRTMGAEVRLCGPSTLLPPELAITGVKVFTRIEEALEGADVVNVLRLQLERQKKGLFPTIREYARQFGLNQERLKRCKSDVLVLHPGPMNRGVEIADDVADADFAAIEEQVTNGVAVRMAILYLMMGGSGSGAVH.

Carbamoyl phosphate-binding residues include arginine 58 and threonine 59. Lysine 86 lines the L-aspartate pocket. 3 residues coordinate carbamoyl phosphate: arginine 108, histidine 136, and glutamine 139. Arginine 169 and arginine 223 together coordinate L-aspartate. Carbamoyl phosphate is bound by residues glycine 264 and proline 265.

This sequence belongs to the aspartate/ornithine carbamoyltransferase superfamily. ATCase family. As to quaternary structure, heterododecamer (2C3:3R2) of six catalytic PyrB chains organized as two trimers (C3), and six regulatory PyrI chains organized as three dimers (R2).

The catalysed reaction is carbamoyl phosphate + L-aspartate = N-carbamoyl-L-aspartate + phosphate + H(+). Its pathway is pyrimidine metabolism; UMP biosynthesis via de novo pathway; (S)-dihydroorotate from bicarbonate: step 2/3. In terms of biological role, catalyzes the condensation of carbamoyl phosphate and aspartate to form carbamoyl aspartate and inorganic phosphate, the committed step in the de novo pyrimidine nucleotide biosynthesis pathway. This is Aspartate carbamoyltransferase catalytic subunit from Heliobacterium modesticaldum (strain ATCC 51547 / Ice1).